The following is a 91-amino-acid chain: RNA-binding protein Hfq (91 aa).

The region spanning aspartate 9–valine 68 is the Sm domain. Residues serine 69 to glutamate 91 form a disordered region.

It belongs to the Hfq family. As to quaternary structure, homohexamer.

In terms of biological role, RNA chaperone that binds small regulatory RNA (sRNAs) and mRNAs to facilitate mRNA translational regulation in response to envelope stress, environmental stress and changes in metabolite concentrations. Also binds with high specificity to tRNAs. This Haemophilus influenzae (strain ATCC 51907 / DSM 11121 / KW20 / Rd) protein is RNA-binding protein Hfq.